We begin with the raw amino-acid sequence, 134 residues long: Small ribosomal subunit protein uS8 (134 aa).

It belongs to the universal ribosomal protein uS8 family. Part of the 30S ribosomal subunit. Contacts proteins S5 and S12.

One of the primary rRNA binding proteins, it binds directly to 16S rRNA central domain where it helps coordinate assembly of the platform of the 30S subunit. In Thermotoga neapolitana (strain ATCC 49049 / DSM 4359 / NBRC 107923 / NS-E), this protein is Small ribosomal subunit protein uS8.